Here is a 33-residue protein sequence, read N- to C-terminus: Ferredoxin (33 aa).

The 2Fe-2S ferredoxin-type domain occupies 3–33; the sequence is KYKVRLLSEAEGIDVTIDSADDVYILDAAEE.

This sequence belongs to the 2Fe2S plant-type ferredoxin family. It depends on [2Fe-2S] cluster as a cofactor.

It localises to the plastid. The protein resides in the chloroplast. Ferredoxins are iron-sulfur proteins that transfer electrons in a wide variety of metabolic reactions. The protein is Ferredoxin of Porphyridium aerugineum (Red microalga).